Here is a 176-residue protein sequence, read N- to C-terminus: Dual-action ribosomal maturation protein DarP (176 aa).

It belongs to the DarP family.

It localises to the cytoplasm. In terms of biological role, member of a network of 50S ribosomal subunit biogenesis factors which assembles along the 30S-50S interface, preventing incorrect 23S rRNA structures from forming. Promotes peptidyl transferase center (PTC) maturation. This Actinobacillus pleuropneumoniae serotype 5b (strain L20) protein is Dual-action ribosomal maturation protein DarP.